A 443-amino-acid polypeptide reads, in one-letter code: ATP-dependent protease ATPase subunit HslU (443 aa).

ATP is bound by residues Ile-18, 60–65, Asp-256, Glu-321, and Arg-393; that span reads GVGKTE.

Belongs to the ClpX chaperone family. HslU subfamily. In terms of assembly, a double ring-shaped homohexamer of HslV is capped on each side by a ring-shaped HslU homohexamer. The assembly of the HslU/HslV complex is dependent on binding of ATP.

It is found in the cytoplasm. In terms of biological role, ATPase subunit of a proteasome-like degradation complex; this subunit has chaperone activity. The binding of ATP and its subsequent hydrolysis by HslU are essential for unfolding of protein substrates subsequently hydrolyzed by HslV. HslU recognizes the N-terminal part of its protein substrates and unfolds these before they are guided to HslV for hydrolysis. The chain is ATP-dependent protease ATPase subunit HslU from Citrobacter koseri (strain ATCC BAA-895 / CDC 4225-83 / SGSC4696).